The chain runs to 479 residues: Mitochondria-eating protein (479 aa).

Coiled coils occupy residues 109–161 (ERKL…LATT) and 187–223 (LRRL…RIAR). Disordered stretches follow at residues 220-251 (RIAR…GRAR) and 456-479 (RSRS…SRSR). Residues 235–249 (RSPSPLPLRSCSPGR) are compositionally biased toward low complexity.

It belongs to the MIEAP family.

It is found in the cytoplasm. The protein localises to the cytosol. Its subcellular location is the mitochondrion outer membrane. The protein resides in the mitochondrion matrix. In terms of biological role, key regulator of mitochondrial quality that mediates the repairing or degradation of unhealthy mitochondria in response to mitochondrial damage. Mediator of mitochondrial protein catabolic process (also named MALM) by mediating the degradation of damaged proteins inside mitochondria by promoting the accumulation in the mitochondrial matrix of hydrolases that are characteristic of the lysosomal lumen. Also involved in mitochondrion degradation of damaged mitochondria by promoting the formation of vacuole-like structures (named MIV), which engulf and degrade unhealthy mitochondria by accumulating lysosomes. Binds cardiolipin. May form molecular condensates (non-membrane-bounded organelles) within mitochondria that compartmentalize and promote cardiolipin metabolism. The sequence is that of Mitochondria-eating protein (SPATA18) from Gallus gallus (Chicken).